Reading from the N-terminus, the 275-residue chain is N-(5'-phosphoribosyl)anthranilate isomerase 1, chloroplastic (275 aa).

The transit peptide at 1–32 directs the protein to the chloroplast; the sequence is MSTGISTDLHVHFGALNFSKTYKSGLSNRTVS.

Belongs to the TrpF family. Expressed in roots and shoots.

It localises to the plastid. The protein localises to the chloroplast. It carries out the reaction N-(5-phospho-beta-D-ribosyl)anthranilate = 1-(2-carboxyphenylamino)-1-deoxy-D-ribulose 5-phosphate. The protein operates within amino-acid biosynthesis; L-tryptophan biosynthesis; L-tryptophan from chorismate: step 3/5. Catalyzes the conversion of 5-phosphoribosylanthranilate to l-(O-carboxyphenylamino)-l-deoxyribulose-5-phosphate, which is the third step of the tryptophan biosynthetic pathway. The polypeptide is N-(5'-phosphoribosyl)anthranilate isomerase 1, chloroplastic (PAI1) (Arabidopsis thaliana (Mouse-ear cress)).